The chain runs to 589 residues: Aspartate--tRNA(Asp/Asn) ligase (589 aa).

Residue glutamate 170 coordinates L-aspartate. The segment at 194-197 (QLFK) is aspartate. Arginine 216 is a binding site for L-aspartate. Residues 216–218 (RDE) and glutamine 225 each bind ATP. Residue histidine 448 participates in L-aspartate binding. Glutamate 482 serves as a coordination point for ATP. Arginine 489 lines the L-aspartate pocket. 534 to 537 (GWDR) contributes to the ATP binding site. A disordered region spans residues 563 to 589 (PLTDAPASITAQQRKESGIDTKPKEVE). A compositionally biased stretch (basic and acidic residues) spans 575 to 589 (QRKESGIDTKPKEVE).

The protein belongs to the class-II aminoacyl-tRNA synthetase family. Type 1 subfamily. As to quaternary structure, homodimer.

The protein localises to the cytoplasm. The catalysed reaction is tRNA(Asx) + L-aspartate + ATP = L-aspartyl-tRNA(Asx) + AMP + diphosphate. In terms of biological role, aspartyl-tRNA synthetase with relaxed tRNA specificity since it is able to aspartylate not only its cognate tRNA(Asp) but also tRNA(Asn). Reaction proceeds in two steps: L-aspartate is first activated by ATP to form Asp-AMP and then transferred to the acceptor end of tRNA(Asp/Asn). The chain is Aspartate--tRNA(Asp/Asn) ligase from Mycobacterium leprae (strain Br4923).